Here is a 270-residue protein sequence, read N- to C-terminus: ATP synthase subunit a (270 aa).

5 consecutive transmembrane segments (helical) span residues 38-58, 98-118, 143-163, 208-228, and 239-259; these read VHIDSLFFSWFTGLIFLGIFY, IAPLALTIFCWVFLMNVMDLV, DVNITMAMALGVFALMIYYSI, LFGNMFAGEVVFILCAAMLPW, and AIFHILVITIQAFVFMMLTIV.

It belongs to the ATPase A chain family. As to quaternary structure, F-type ATPases have 2 components, CF(1) - the catalytic core - and CF(0) - the membrane proton channel. CF(1) has five subunits: alpha(3), beta(3), gamma(1), delta(1), epsilon(1). CF(0) has three main subunits: a(1), b(2) and c(9-12). The alpha and beta chains form an alternating ring which encloses part of the gamma chain. CF(1) is attached to CF(0) by a central stalk formed by the gamma and epsilon chains, while a peripheral stalk is formed by the delta and b chains.

The protein localises to the cell inner membrane. Its function is as follows. Key component of the proton channel; it plays a direct role in the translocation of protons across the membrane. The polypeptide is ATP synthase subunit a (Vibrio alginolyticus).